Reading from the N-terminus, the 77-residue chain is UPF0291 protein EAT1b_0405 (77 aa).

A disordered region spans residues 53–77 (KVVDPDGNDVTPEKLKEDQKRYRGE). Basic and acidic residues predominate over residues 63-77 (TPEKLKEDQKRYRGE).

Belongs to the UPF0291 family.

The protein localises to the cytoplasm. In Exiguobacterium sp. (strain ATCC BAA-1283 / AT1b), this protein is UPF0291 protein EAT1b_0405.